Here is a 239-residue protein sequence, read N- to C-terminus: Proteasome activator complex subunit 2 (239 aa).

Ala-2 is subject to N-acetylalanine. Ser-10 bears the Phosphoserine mark. The tract at residues 65-87 (DIPIPDPPPKDDEMETDKQEKKE) is disordered. The segment covering 72-87 (PPKDDEMETDKQEKKE) has biased composition (basic and acidic residues).

Belongs to the PA28 family. As to quaternary structure, heterodimer of PSME1 and PSME2, which forms a hexameric ring.

Functionally, implicated in immunoproteasome assembly and required for efficient antigen processing. The PA28 activator complex enhances the generation of class I binding peptides by altering the cleavage pattern of the proteasome. This chain is Proteasome activator complex subunit 2 (Psme2), found in Mus musculus (Mouse).